A 367-amino-acid chain; its full sequence is Teichoic acid glycerol-phosphate primase (367 aa).

It belongs to the CDP-glycerol glycerophosphotransferase family.

The protein localises to the cell membrane. It catalyses the reaction N-acetyl-beta-D-mannosaminyl-(1-&gt;4)-N-acetyl-alpha-D-glucosaminyl di-trans,octa-cis-undecaprenyl diphosphate + CDP-glycerol = 4-O-[(2R)-glycerylphospho]-N-acetyl-beta-D-mannosaminyl-(1-&gt;4)-N-acetyl-alpha-D-glucosaminyl di-trans,octa-cis-undecaprenyl diphosphate + CMP + H(+). It participates in cell wall biogenesis; poly(ribitol phosphate) teichoic acid biosynthesis. Functionally, catalyzes the addition of a single glycerol phosphate residue to the prenoldiphosphate-linked disaccharide. In Staphylococcus aureus (strain NCTC 8325 / PS 47), this protein is Teichoic acid glycerol-phosphate primase (tarB).